A 563-amino-acid chain; its full sequence is MGPRSGLLGLFALFVAGKCSYSPEPDQQRRLPPGWVSLGRADPEEELSLTFALRQQNVKRLSELVQAVSDPGSPRYGKYLTLEDVAELVRPSPLTLHTVQKWLLAAGARNCHSVTTQDFLTCWLSVRQAELLLSGAEFHHYVGGPAETHAVRSLHPYRLPKALAPHVDFVGGLHRFPPTSTLRQHPEPQVPGTVGLHLGVTPSVIRKRYNLTAQDVGSGTTNNSQACAQFLEQYFHDSDLAEFMRLFGGDFAHQASVARVVGQQGRGRAGIEASLDVEYLMSAGANISTWVYSSPGRHESQEPFLQWLLLLSNESALPYVHTVSYGDDEDSLSSTYIQRVNTELMKAAARGLTLLFASGDSGAGCWSVSGRHQFRPSFPASSPYVTTVGGTSFQNPFRVTDEVVDYISGGGFSNVFPRPSYQEEAVTRYLSSSPHLPPSSYFNASGRAYPDVAALSDGYWVVSNHVPIPWVSGTSASTPVFGGLLSLINEHRILRGLPPLGFLNPRLYQKHGAGLFDVTRGCHESCLNEEVEGQGFCSGPGWDPVTGWGTPNFPALLKTLMNP.

Positions 1–19 (MGPRSGLLGLFALFVAGKC) are cleaved as a signal peptide. Positions 20–195 (SYSPEPDQQR…PEPQVPGTVG (176 aa)) are cleaved as a propeptide — removed in mature form. A disulfide bond links Cys111 and Cys122. In terms of domain architecture, Peptidase S53 spans 199 to 563 (GVTPSVIRKR…PALLKTLMNP (365 aa)). N-linked (GlcNAc...) asparagine glycosylation is found at Asn210 and Asn222. Catalysis depends on charge relay system residues Glu272 and Asp276. Residues Asn286, Asn313, and Asn443 are each glycosylated (N-linked (GlcNAc...) asparagine). 2 disulfide bridges follow: Cys365-Cys526 and Cys522-Cys537. Ser475 acts as the Charge relay system in catalysis. Ca(2+)-binding residues include Asp517 and Val518. Gly539, Gly541, and Asp543 together coordinate Ca(2+).

Monomer. Interacts with CLN5. Interacts with CLN3. Ca(2+) is required as a cofactor. Activated by autocatalytic proteolytical processing upon acidification. N-glycosylation is required for processing and activity.

Its subcellular location is the lysosome. It localises to the melanosome. The catalysed reaction is Release of an N-terminal tripeptide from a polypeptide, but also has endopeptidase activity.. In terms of biological role, lysosomal serine protease with tripeptidyl-peptidase I activity. May act as a non-specific lysosomal peptidase which generates tripeptides from the breakdown products produced by lysosomal proteinases. Requires substrates with an unsubstituted N-terminus. This chain is Tripeptidyl-peptidase 1 (TPP1), found in Bos taurus (Bovine).